Consider the following 247-residue polypeptide: Proteasome subunit alpha (247 aa).

Belongs to the peptidase T1A family. As to quaternary structure, the 20S proteasome core is composed of 14 alpha and 14 beta subunits that assemble into four stacked heptameric rings, resulting in a barrel-shaped structure. The two inner rings, each composed of seven catalytic beta subunits, are sandwiched by two outer rings, each composed of seven alpha subunits. The catalytic chamber with the active sites is on the inside of the barrel. Has a gated structure, the ends of the cylinder being occluded by the N-termini of the alpha-subunits. Is capped at one or both ends by the proteasome regulatory ATPase, PAN.

It localises to the cytoplasm. The formation of the proteasomal ATPase PAN-20S proteasome complex, via the docking of the C-termini of PAN into the intersubunit pockets in the alpha-rings, triggers opening of the gate for substrate entry. Interconversion between the open-gate and close-gate conformations leads to a dynamic regulation of the 20S proteasome proteolysis activity. Component of the proteasome core, a large protease complex with broad specificity involved in protein degradation. The sequence is that of Proteasome subunit alpha from Methanosarcina thermophila.